Here is a 333-residue protein sequence, read N- to C-terminus: Probable xyloglucan endotransglucosylase/hydrolase protein 27 (333 aa).

An N-terminal signal peptide occupies residues 1-20 (METLSRLLVFMSLFSGLVSG). The region spanning 21–223 (FALQNLPITS…YKYAPYIARF (203 aa)) is the GH16 domain. The active-site Nucleophile is Glu108. The active-site Proton donor is the Glu112. Residues Glu112 and 125-127 (QTN) each bind xyloglucan. An N-linked (GlcNAc...) asparagine glycan is attached at Asn131. Xyloglucan-binding positions include 135–139 (HSGRE), 202–203 (KW), Gly207, and Arg282. Cys277 and Cys290 are oxidised to a cystine. The interval 311–333 (IPRRHRNGKHRSKRSRVDGTESI) is disordered. Residues 312 to 324 (PRRHRNGKHRSKR) show a composition bias toward basic residues.

The protein belongs to the glycosyl hydrolase 16 family. XTH group 3 subfamily. Post-translationally, contains at least one intrachain disulfide bond essential for its enzymatic activity. In terms of tissue distribution, expressed in 7 day old seedlings, roots, hypocotyls, rosette leaves, internodes between nodes bearing axillary shoots, nodes bearing flowers, flower buds, anthers and siliques.

The protein localises to the secreted. Its subcellular location is the cell wall. The protein resides in the extracellular space. It localises to the apoplast. It catalyses the reaction breaks a beta-(1-&gt;4) bond in the backbone of a xyloglucan and transfers the xyloglucanyl segment on to O-4 of the non-reducing terminal glucose residue of an acceptor, which can be a xyloglucan or an oligosaccharide of xyloglucan.. In terms of biological role, catalyzes xyloglucan endohydrolysis (XEH) and/or endotransglycosylation (XET). Cleaves and religates xyloglucan polymers, an essential constituent of the primary cell wall, and thereby participates in cell wall construction of growing tissues. Required for cell wall modification during the development of tracheary elements. The chain is Probable xyloglucan endotransglucosylase/hydrolase protein 27 (XTH27) from Arabidopsis thaliana (Mouse-ear cress).